The chain runs to 800 residues: DNA topoisomerase 1 (800 aa).

The Toprim domain occupies M1–V111. Residues E7 and D80 each contribute to the Mg(2+) site. A Topo IA-type catalytic domain is found at D132–E568. The tract at residues S166–Q171 is interaction with DNA. Residue Y304 is the O-(5'-phospho-DNA)-tyrosine intermediate of the active site. The segment at C600–C627 adopts a C4-type zinc-finger fold.

This sequence belongs to the type IA topoisomerase family. As to quaternary structure, monomer. Mg(2+) is required as a cofactor.

The enzyme catalyses ATP-independent breakage of single-stranded DNA, followed by passage and rejoining.. In terms of biological role, releases the supercoiling and torsional tension of DNA, which is introduced during the DNA replication and transcription, by transiently cleaving and rejoining one strand of the DNA duplex. Introduces a single-strand break via transesterification at a target site in duplex DNA. The scissile phosphodiester is attacked by the catalytic tyrosine of the enzyme, resulting in the formation of a DNA-(5'-phosphotyrosyl)-enzyme intermediate and the expulsion of a 3'-OH DNA strand. The free DNA strand then undergoes passage around the unbroken strand, thus removing DNA supercoils. Finally, in the religation step, the DNA 3'-OH attacks the covalent intermediate to expel the active-site tyrosine and restore the DNA phosphodiester backbone. This chain is DNA topoisomerase 1, found in Rickettsia bellii (strain RML369-C).